A 292-amino-acid chain; its full sequence is Peroxisomal 2,4-dienoyl-CoA reductase SPS19 [(3E)-enoyl-CoA-producing] (292 aa).

NADP(+) contacts are provided by I36, D85, and K145. Residue S162 is the Proton donor of the active site. K180 contacts NADP(+). Residue K180 is the Lowers pKa of active site Tyr of the active site. K188 is covalently cross-linked (Glycyl lysine isopeptide (Lys-Gly) (interchain with G-Cter in ubiquitin)). An NADP(+)-binding site is contributed by I209. The Microbody targeting signal signature appears at 290-292 (SKL).

This sequence belongs to the short-chain dehydrogenases/reductases (SDR) family. In terms of assembly, homodimer.

It localises to the peroxisome. It catalyses the reaction a (2E,4Z)-dienoyl-CoA + NADPH + H(+) = a 4,5-saturated-(3E)-enoyl-CoA + NADP(+). The enzyme catalyses a (2E,4E)-dienoyl-CoA + NADPH + H(+) = a 4,5-saturated-(3E)-enoyl-CoA + NADP(+). Auxiliary enzyme of beta-oxidation. Participates in the degradation of unsaturated fatty enoyl-CoA esters having double bonds in both even- and odd-numbered positions in peroxisome. Catalyzes the NADP-dependent reduction of 2,4-dienoyl-CoA to yield trans-3-enoyl-CoA. Dispensable for growth and sporulation on solid acetate and oleate media, but is essential for these processes to occur on petroselineate. This chain is Peroxisomal 2,4-dienoyl-CoA reductase SPS19 [(3E)-enoyl-CoA-producing] (SPS19), found in Saccharomyces cerevisiae (strain ATCC 204508 / S288c) (Baker's yeast).